The chain runs to 33 residues: Toxin Bcg III 25.52 (33 aa).

Cysteine 6 and cysteine 28 form a disulfide bridge.

The protein localises to the secreted. It is found in the nematocyst. The polypeptide is Toxin Bcg III 25.52 (Bunodosoma cangicum (Sea anemone)).